Here is a 1047-residue protein sequence, read N- to C-terminus: FACT complex subunit SPT16 (1047 aa).

A2 carries the N-acetylalanine modification. K139 is modified (N6-acetyllysine). S188 bears the Phosphoserine mark. 2 positions are modified to N6-acetyllysine: K196 and K223. Residue S455 is modified to Phosphoserine. The stretch at 465-507 forms a coiled coil; the sequence is RNEMTAEEKRRAHQKELAAQLNEEAKRRLTEQKGEQQIQKARK. Residues 491–518 are disordered; that stretch reads RRLTEQKGEQQIQKARKSNVSYKNPSLM. K497 is covalently cross-linked (Glycyl lysine isopeptide (Lys-Gly) (interchain with G-Cter in SUMO2)). A compositionally biased stretch (polar residues) spans 499–514; sequence EQQIQKARKSNVSYKN. Position 508 is a phosphoserine (S508). N6-acetyllysine; alternate is present on K513. K513 is covalently cross-linked (Glycyl lysine isopeptide (Lys-Gly) (interchain with G-Cter in SUMO2); alternate). K647 participates in a covalent cross-link: Glycyl lysine isopeptide (Lys-Gly) (interchain with G-Cter in SUMO2). A phosphoserine mark is found at S650 and S658. N6-acetyllysine is present on residues K732 and K786. T903 is modified (phosphothreonine). K904 carries the N6-acetyllysine modification. Residues 918-1047 are disordered; the sequence is EQGGWSFLEP…SSAPPKKKRK (130 aa). Positions 927 to 973 are enriched in acidic residues; that stretch reads PEGEGSDAEDGDSESEIEDETFNPSEDDYEEEEEDSDEDYSSEAEES. A phosphoserine mark is found at S979, S982, S986, and S1015. Over residues 985 to 1005 the composition is skewed to basic and acidic residues; that stretch reads ESGKDWDELEEEARKADRESR. The span at 1024 to 1039 shows a compositional bias: low complexity; that stretch reads VHSSGRGSNRGSRHSS.

It belongs to the peptidase M24 family. SPT16 subfamily. As to quaternary structure, interacts with MYOG (via C-terminal region). Component of the FACT complex, a stable heterodimer of SSRP1 and SUPT16H. Also a component of a CK2-SPT16-SSRP1 complex which forms following UV irradiation, composed of SSRP1, SUPT16H, CSNK2A1, CSNK2A2 and CSNK2B. Interacts with NEK9. Binds to histone H2A-H2B. Identified in a centromere complex containing histones H2A, H2B and H4, and at least CENPA, CENPB, CENPC, CENPT, CENPN, HJURP, SUPT16H, SSRP1 and RSF1. Interacts with GTF2E2. In terms of processing, ADP-ribosylated. ADP-ribosylation by PARP1 is induced by genotoxic stress and correlates with dissociation of FACT from chromatin. In terms of tissue distribution, widely expressed. Expressed in brain, liver, heart, kidneys, lungs, spleen, thymus, ovary, and testes, with highest levels of expression observed in thymus.

It localises to the nucleus. The protein localises to the chromosome. Its function is as follows. Component of the FACT complex, a general chromatin factor that acts to reorganize nucleosomes. The FACT complex is involved in multiple processes that require DNA as a template such as mRNA elongation, DNA replication and DNA repair. During transcription elongation the FACT complex acts as a histone chaperone that both destabilizes and restores nucleosomal structure. It facilitates the passage of RNA polymerase II and transcription by promoting the dissociation of one histone H2A-H2B dimer from the nucleosome, then subsequently promotes the reestablishment of the nucleosome following the passage of RNA polymerase II. The FACT complex is probably also involved in phosphorylation of 'Ser-392' of p53/TP53 via its association with CK2 (casein kinase II). This is FACT complex subunit SPT16 (Supt16h) from Mus musculus (Mouse).